A 286-amino-acid polypeptide reads, in one-letter code: UDP-3-O-acyl-N-acetylglucosamine deacetylase (286 aa).

Residues His-81, His-240, and Asp-244 each contribute to the Zn(2+) site. Residue His-266 is the Proton donor of the active site.

This sequence belongs to the LpxC family. It depends on Zn(2+) as a cofactor.

It carries out the reaction a UDP-3-O-[(3R)-3-hydroxyacyl]-N-acetyl-alpha-D-glucosamine + H2O = a UDP-3-O-[(3R)-3-hydroxyacyl]-alpha-D-glucosamine + acetate. Its pathway is glycolipid biosynthesis; lipid IV(A) biosynthesis; lipid IV(A) from (3R)-3-hydroxytetradecanoyl-[acyl-carrier-protein] and UDP-N-acetyl-alpha-D-glucosamine: step 2/6. Functionally, catalyzes the hydrolysis of UDP-3-O-myristoyl-N-acetylglucosamine to form UDP-3-O-myristoylglucosamine and acetate, the committed step in lipid A biosynthesis. The protein is UDP-3-O-acyl-N-acetylglucosamine deacetylase of Francisella tularensis subsp. tularensis (strain FSC 198).